A 245-amino-acid polypeptide reads, in one-letter code: MADKYGPIFSLQLGIHKTIVVSSWAVAKECFTTHDKVFLTRPKSLAGKHMGYDHSVFLFLAYGPYWRDTRKLLIVELLSNRRLDVLKHVRESEVNSFVREMYEQWISNGGGGSKAVVEMKERFGYLTMNVILRMVAGKRYSGTEVYSDEARRFQKALGDLLHLVVLSMVSDAVPLFGWIDALRGYTGEMKNTAKEIDHVLGRWLKEHRQKRETLSINESEHDFIHGMQSVMDGSQFTEHDTDKAI.

Belongs to the cytochrome P450 family. Heme is required as a cofactor.

Probable heme-thiolate monooxygenase. The polypeptide is Cytochrome P450 CYP82H23 (Panax ginseng (Korean ginseng)).